Reading from the N-terminus, the 283-residue chain is Probable endonuclease 4 (283 aa).

Zn(2+)-binding residues include histidine 66, histidine 106, glutamate 141, aspartate 174, histidine 177, histidine 211, aspartate 224, histidine 226, and glutamate 256.

This sequence belongs to the AP endonuclease 2 family. The cofactor is Zn(2+).

It catalyses the reaction Endonucleolytic cleavage to 5'-phosphooligonucleotide end-products.. In terms of biological role, endonuclease IV plays a role in DNA repair. It cleaves phosphodiester bonds at apurinic or apyrimidinic (AP) sites, generating a 3'-hydroxyl group and a 5'-terminal sugar phosphate. This is Probable endonuclease 4 from Carboxydothermus hydrogenoformans (strain ATCC BAA-161 / DSM 6008 / Z-2901).